Here is an 80-residue protein sequence, read N- to C-terminus: Translation initiation factor IF-1 (80 aa).

An S1-like domain is found at 6-80; that stretch reads EKKKKDESDS…TSRGRIVYRR (75 aa).

This sequence belongs to the IF-1 family. Component of the 30S ribosomal translation pre-initiation complex which assembles on the 30S ribosome in the order IF-2 and IF-3, IF-1 and N-formylmethionyl-tRNA(fMet); mRNA recruitment can occur at any time during PIC assembly.

It localises to the cytoplasm. In terms of biological role, one of the essential components for the initiation of protein synthesis. Stabilizes the binding of IF-2 and IF-3 on the 30S subunit to which N-formylmethionyl-tRNA(fMet) subsequently binds. Helps modulate mRNA selection, yielding the 30S pre-initiation complex (PIC). Upon addition of the 50S ribosomal subunit IF-1, IF-2 and IF-3 are released leaving the mature 70S translation initiation complex. The chain is Translation initiation factor IF-1 from Deinococcus radiodurans (strain ATCC 13939 / DSM 20539 / JCM 16871 / CCUG 27074 / LMG 4051 / NBRC 15346 / NCIMB 9279 / VKM B-1422 / R1).